The sequence spans 121 residues: Small ribosomal subunit protein uS13 (121 aa).

The interval 91 to 121 (HRMSLPVRGQRTRTNARTRRGSRKTVAGRKK) is disordered. The segment covering 100-121 (QRTRTNARTRRGSRKTVAGRKK) has biased composition (basic residues).

It belongs to the universal ribosomal protein uS13 family. As to quaternary structure, part of the 30S ribosomal subunit. Forms a loose heterodimer with protein S19. Forms two bridges to the 50S subunit in the 70S ribosome.

Its function is as follows. Located at the top of the head of the 30S subunit, it contacts several helices of the 16S rRNA. In the 70S ribosome it contacts the 23S rRNA (bridge B1a) and protein L5 of the 50S subunit (bridge B1b), connecting the 2 subunits; these bridges are implicated in subunit movement. Contacts the tRNAs in the A and P-sites. In Prochlorococcus marinus (strain MIT 9515), this protein is Small ribosomal subunit protein uS13.